Reading from the N-terminus, the 564-residue chain is Chaperonin GroEL 2 (564 aa).

Residues 29-32 (TIGP), 86-90 (DGTTT), Gly-413, and Asp-493 each bind ATP. Residues 521 to 541 (DKPEPPAPAGDGGGDPMGGMG) are disordered. A compositionally biased stretch (gly residues) spans 530-541 (GDGGGDPMGGMG).

The protein belongs to the chaperonin (HSP60) family. In terms of assembly, forms a cylinder of 14 subunits composed of two heptameric rings stacked back-to-back. Interacts with the co-chaperonin GroES.

It is found in the cytoplasm. It carries out the reaction ATP + H2O + a folded polypeptide = ADP + phosphate + an unfolded polypeptide.. In terms of biological role, together with its co-chaperonin GroES, plays an essential role in assisting protein folding. The GroEL-GroES system forms a nano-cage that allows encapsulation of the non-native substrate proteins and provides a physical environment optimized to promote and accelerate protein folding. This Prochlorococcus marinus (strain MIT 9303) protein is Chaperonin GroEL 2.